Consider the following 248-residue polypeptide: Ribonuclease PH (248 aa).

Phosphate contacts are provided by residues Arg86 and 124–126; that span reads GTR.

This sequence belongs to the RNase PH family. In terms of assembly, homohexameric ring arranged as a trimer of dimers.

It carries out the reaction tRNA(n+1) + phosphate = tRNA(n) + a ribonucleoside 5'-diphosphate. Its function is as follows. Phosphorolytic 3'-5' exoribonuclease that plays an important role in tRNA 3'-end maturation. Removes nucleotide residues following the 3'-CCA terminus of tRNAs; can also add nucleotides to the ends of RNA molecules by using nucleoside diphosphates as substrates, but this may not be physiologically important. Probably plays a role in initiation of 16S rRNA degradation (leading to ribosome degradation) during starvation. In Clostridium perfringens (strain SM101 / Type A), this protein is Ribonuclease PH.